A 40-amino-acid chain; its full sequence is Photosystem II reaction center protein J (40 aa).

A helical transmembrane segment spans residues 8 to 28 (IPLWVVATIAGLGVITVVGIF).

The protein belongs to the PsbJ family. As to quaternary structure, PSII is composed of 1 copy each of membrane proteins PsbA, PsbB, PsbC, PsbD, PsbE, PsbF, PsbH, PsbI, PsbJ, PsbK, PsbL, PsbM, PsbT, PsbX, PsbY, PsbZ, Psb30/Ycf12, peripheral proteins PsbO, CyanoQ (PsbQ), PsbU, PsbV and a large number of cofactors. It forms dimeric complexes.

It localises to the cellular thylakoid membrane. Its function is as follows. One of the components of the core complex of photosystem II (PSII). PSII is a light-driven water:plastoquinone oxidoreductase that uses light energy to abstract electrons from H(2)O, generating O(2) and a proton gradient subsequently used for ATP formation. It consists of a core antenna complex that captures photons, and an electron transfer chain that converts photonic excitation into a charge separation. This Nostoc sp. (strain PCC 7120 / SAG 25.82 / UTEX 2576) protein is Photosystem II reaction center protein J.